Reading from the N-terminus, the 438-residue chain is 3-phosphoshikimate 1-carboxyvinyltransferase (438 aa).

Positions 25, 26, and 30 each coordinate 3-phosphoshikimate. Lys-25 contacts phosphoenolpyruvate. Gly-99 and Arg-128 together coordinate phosphoenolpyruvate. Ser-173, Gln-175, Asp-325, and Lys-352 together coordinate 3-phosphoshikimate. Gln-175 serves as a coordination point for phosphoenolpyruvate. The Proton acceptor role is filled by Asp-325. Residues Arg-356 and Arg-398 each contribute to the phosphoenolpyruvate site.

The protein belongs to the EPSP synthase family. Monomer.

It localises to the cytoplasm. It carries out the reaction 3-phosphoshikimate + phosphoenolpyruvate = 5-O-(1-carboxyvinyl)-3-phosphoshikimate + phosphate. It functions in the pathway metabolic intermediate biosynthesis; chorismate biosynthesis; chorismate from D-erythrose 4-phosphate and phosphoenolpyruvate: step 6/7. Its function is as follows. Catalyzes the transfer of the enolpyruvyl moiety of phosphoenolpyruvate (PEP) to the 5-hydroxyl of shikimate-3-phosphate (S3P) to produce enolpyruvyl shikimate-3-phosphate and inorganic phosphate. This chain is 3-phosphoshikimate 1-carboxyvinyltransferase, found in Prochlorococcus marinus subsp. pastoris (strain CCMP1986 / NIES-2087 / MED4).